A 65-amino-acid chain; its full sequence is Putative beta-neurotoxin RjAa4 (65 aa).

An LCN-type CS-alpha/beta domain is found at Lys1–Gly64. 4 cysteine pairs are disulfide-bonded: Cys11-Cys63, Cys15-Cys37, Cys22-Cys44, and Cys26-Cys46.

The protein belongs to the long (4 C-C) scorpion toxin superfamily. Sodium channel inhibitor family. Beta subfamily. In terms of tissue distribution, expressed by the venom gland.

Its subcellular location is the secreted. Beta toxins bind voltage-independently at site-4 of sodium channels (Nav) and shift the voltage of activation toward more negative potentials thereby affecting sodium channel activation and promoting spontaneous and repetitive firing. This chain is Putative beta-neurotoxin RjAa4, found in Rhopalurus junceus (Caribbean blue scorpion).